The primary structure comprises 845 residues: BLOC-2 complex member HPS5 homolog (845 aa).

The segment at 239–268 is disordered; it reads PTEEDLEDAKSMEGSDDNDNDQRSSPSGVK.

The protein belongs to the HPS5 family.

In terms of biological role, has a role in the biogenesis of eye pigment granules. Eye pigment granules are specialized forms of late endosomes or lysosomes. Biogenesis of pigment granules in the eye requires molecular components required for protein delivery to lysosomes. This chain is BLOC-2 complex member HPS5 homolog, found in Aedes aegypti (Yellowfever mosquito).